Consider the following 120-residue polypeptide: MNQLIQLVESSLGANRFEQVRPGDTVKIQLRVIEGEKERLQAFEGVVISDRGEGGSKTITVRKISHGVGVERIIPVNSPNIESVTVLRHGRARRAKLFYLRKRTGKAALKVKERKTQVNA.

The protein belongs to the bacterial ribosomal protein bL19 family.

This protein is located at the 30S-50S ribosomal subunit interface and may play a role in the structure and function of the aminoacyl-tRNA binding site. The chain is Large ribosomal subunit protein bL19 from Chlorobium chlorochromatii (strain CaD3).